Consider the following 418-residue polypeptide: Actin-related protein 3 (418 aa).

An N-acetylalanine modification is found at alanine 2.

It belongs to the actin family. ARP3 subfamily. In terms of assembly, component of the Arp2/3 complex composed of ACTR2/ARP2, ACTR3/ARP3, ARPC1B/p41-ARC, ARPC2/p34-ARC, ARPC3/p21-ARC, ARPC4/p20-ARC and ARPC5/p16-ARC. In terms of tissue distribution, detected in fibroblasts.

The protein localises to the cytoplasm. Its subcellular location is the cytoskeleton. It is found in the cell projection. The protein resides in the nucleus. Its function is as follows. ATP-binding component of the Arp2/3 complex, a multiprotein complex that mediates actin polymerization upon stimulation by nucleation-promoting factor (NPF). The Arp2/3 complex mediates the formation of branched actin networks in the cytoplasm, providing the force for cell motility. Seems to contact the pointed end of the daughter actin filament. In addition to its role in the cytoplasmic cytoskeleton, the Arp2/3 complex also promotes actin polymerization in the nucleus, thereby regulating gene transcription and repair of damaged DNA. The Arp2/3 complex promotes homologous recombination (HR) repair in response to DNA damage by promoting nuclear actin polymerization, leading to drive motility of double-strand breaks (DSBs). In Gallus gallus (Chicken), this protein is Actin-related protein 3 (ACTR3).